A 267-amino-acid chain; its full sequence is RWD domain-containing protein 3 (267 aa).

In terms of domain architecture, RWD spans 7-114 (QELSALAAIF…LWTQQNLRHI (108 aa)). 2 interaction with UBE2I/UBC9 regions span residues 13–15 (AAI) and 100–102 (VHE).

As to quaternary structure, interacts with UBE2I/UBC9, NFKBIA, HIF1A and NCOA2.

The protein resides in the nucleus. It localises to the cytoplasm. In terms of biological role, enhancer of SUMO conjugation. Via its interaction with UBE2I/UBC9, increases SUMO conjugation to proteins by promoting the binding of E1 and E2 enzymes, thioester linkage between SUMO and UBE2I/UBC9 and transfer of SUMO to specific target proteins which include HIF1A, PIAS, NFKBIA, NR3C1 and TOP1. Positively regulates the NF-kappa-B signaling pathway by enhancing the sumoylation of NF-kappa-B inhibitor alpha (NFKBIA), promoting its stabilization which consequently leads to an increased inhibition of NF-kappa-B transcriptional activity. Negatively regulates the hypoxia-inducible factor-1 alpha (HIF1A) signaling pathway by increasing the sumoylation of HIF1A, promoting its stabilization, transcriptional activity and the expression of its target gene VEGFA during hypoxia. Has no effect on ubiquitination. This chain is RWD domain-containing protein 3 (Rwdd3), found in Rattus norvegicus (Rat).